Reading from the N-terminus, the 237-residue chain is GATA zinc finger domain-containing protein 18 (237 aa).

Low complexity-rich tracts occupy residues 1–28 and 87–118; these read MAHN…KNNN and NTST…PNSN. Disordered stretches follow at residues 1 to 31, 78 to 119, and 140 to 186; these read MAHN…NSEY, PTNT…NSNL, and FEEG…GGCS. A compositionally biased stretch (acidic residues) spans 140 to 151; it reads FEEGDDEEETSS. Positions 152–167 are enriched in low complexity; the sequence is DSDSSSSSSTSSSSSE. Residues 185–212 form a GATA-type zinc finger; that stretch reads CSICKTQETPYWRKGKDGDKTVYLCNAC.

This Dictyostelium discoideum (Social amoeba) protein is GATA zinc finger domain-containing protein 18 (gtaR).